The following is a 355-amino-acid chain: MEIEILSLFPDYFDSPLRSSILGKAIKNGLLKIQSRDIRDFGLGKWKQVDDAPFNNDGMLLMAEPVVQAIRHIKRSDSRVIHLSPQGKPLTAQKSRELAKCSHLIFLCGHYEGIDERALESEVDEEISIGDYVLTNGGIAALVVIDALSRFIPGVLGNQESAEKDSLENGLLEGPQYTRPRVFEGKEVPEVLLQGDHQAVARWRKQVSLDRTRERRPDLYIRYLYDRENEEVFPREEDTKQSTLEGESAVVLEVEDLQRSRKFYSKMFRLNQPSKDKLQIPGRTQMVLHLQEVGLKNKNTAILSLRLDCEDDFFSFLGRWKMLGGTLEQADDHGTVRLVRDFDGHQWTISYKKVK.

S-adenosyl-L-methionine-binding positions include Gly109 and 129–134; that span reads IGDYVL.

Belongs to the RNA methyltransferase TrmD family. Homodimer.

The protein resides in the cytoplasm. It catalyses the reaction guanosine(37) in tRNA + S-adenosyl-L-methionine = N(1)-methylguanosine(37) in tRNA + S-adenosyl-L-homocysteine + H(+). Its function is as follows. Specifically methylates guanosine-37 in various tRNAs. The protein is tRNA (guanine-N(1)-)-methyltransferase of Chlamydia caviae (strain ATCC VR-813 / DSM 19441 / 03DC25 / GPIC) (Chlamydophila caviae).